A 776-amino-acid polypeptide reads, in one-letter code: Lysyl oxidase homolog 2 (776 aa).

An N-terminal signal peptide occupies residues 1–25 (MELHFGSCLSGCLALLVLLPSLSLA). SRCR domains follow at residues 61 to 162 (VRLA…VVCS), 191 to 305 (IRPI…VSCV), 329 to 428 (VRLR…VRCN), and 438 to 546 (VRLN…VACS). Cystine bridges form between C87–C151, C100–C161, C131–C141, C221–C294, C234–C304, C268–C278, C354–C417, C367–C427, and C398–C408. N-linked (GlcNAc...) asparagine glycosylation is present at N267. A glycan (N-linked (GlcNAc...) asparagine) is linked at N291. N458 is a glycosylation site (N-linked (GlcNAc...) asparagine). 3 disulfide bridges follow: C467-C532, C480-C545, and C514-C524. The lysyl-oxidase like stretch occupies residues 550–753 (PDLVLNAEIV…WMYNCHVGGA (204 aa)). Positions 551 and 552 each coordinate Ca(2+). 4 disulfide bridges follow: C575-C627, C581-C697, C659-C675, and C665-C687. Cu cation contacts are provided by H628, H630, and H632. N-linked (GlcNAc...) asparagine glycosylation occurs at N646. The segment at residues 655–691 (KASFCLEDTECEGDIQKSYECANFGEQGITMGCWDMY) is a cross-link (lysine tyrosylquinone (Lys-Tyr)). A 2',4',5'-topaquinone modification is found at Y691. 4 residues coordinate Ca(2+): E724, D726, N729, and N730. Cysteines 734 and 748 form a disulfide.

It belongs to the lysyl oxidase family. Component of some chromatin repressor complex. Interacts with SNAI1. Interacts with TAF10. Interacts with HSPA5. Interacts with EFEMP2. The cofactor is Cu cation. It depends on lysine tyrosylquinone residue as a cofactor. In terms of processing, the lysine tyrosylquinone cross-link (LTQ) is generated by condensation of the epsilon-amino group of a lysine with a topaquinone produced by oxidation of tyrosine. N-glycosylated. N-glycosylation on Asn-458 and Asn-646 may be essential for proper folding and secretion; may be composed of a fucosylated carbohydrates attached to a trimannose N-linked glycan core. Ubiquitous. Highest expression in skin, lung and thymus. Present in chondrocytes: mainly expressed by chondrocytes in healing fractures and in epiphyseal growth plates (at protein level).

The protein resides in the secreted. It localises to the extracellular space. The protein localises to the extracellular matrix. Its subcellular location is the basement membrane. It is found in the nucleus. The protein resides in the chromosome. It localises to the endoplasmic reticulum. It carries out the reaction L-lysyl-[protein] + O2 + H2O = (S)-2-amino-6-oxohexanoyl-[protein] + H2O2 + NH4(+). With respect to regulation, specifically inhibited by a mouse monoclonal antibody AB0023, inhibition occurs in a non-competitive manner. In terms of biological role, mediates the post-translational oxidative deamination of lysine residues on target proteins leading to the formation of deaminated lysine (allysine). Acts as a transcription corepressor and specifically mediates deamination of trimethylated 'Lys-4' of histone H3 (H3K4me3), a specific tag for epigenetic transcriptional activation. Shows no activity against histone H3 when it is trimethylated on 'Lys-9' (H3K9me3) or 'Lys-27' (H3K27me3) or when 'Lys-4' is monomethylated (H3K4me1) or dimethylated (H3K4me2). Also mediates deamination of methylated TAF10, a member of the transcription factor IID (TFIID) complex, which induces release of TAF10 from promoters, leading to inhibition of TFIID-dependent transcription. LOXL2-mediated deamination of TAF10 results in transcriptional repression of genes required for embryonic stem cell pluripotency including POU5F1/OCT4, NANOG, KLF4 and SOX2. Involved in epithelial to mesenchymal transition (EMT) via interaction with SNAI1 and participates in repression of E-cadherin, probably by mediating deamination of histone H3. During EMT, involved with SNAI1 in negatively regulating pericentromeric heterochromatin transcription. SNAI1 recruits LOXL2 to pericentromeric regions to oxidize histone H3 and repress transcription which leads to release of heterochromatin component CBX5/HP1A, enabling chromatin reorganization and acquisition of mesenchymal traits. Interacts with the endoplasmic reticulum protein HSPA5 which activates the IRE1-XBP1 pathway of the unfolded protein response, leading to expression of several transcription factors involved in EMT and subsequent EMT induction. When secreted into the extracellular matrix, promotes cross-linking of extracellular matrix proteins by mediating oxidative deamination of peptidyl lysine residues in precursors to fibrous collagen and elastin. Acts as a regulator of sprouting angiogenesis, probably via collagen IV scaffolding. Acts as a regulator of chondrocyte differentiation, probably by regulating expression of factors that control chondrocyte differentiation. The sequence is that of Lysyl oxidase homolog 2 (Loxl2) from Mus musculus (Mouse).